A 255-amino-acid polypeptide reads, in one-letter code: Ribonuclease PH (255 aa).

Residues Arg-86 and 124 to 126 (GTR) each bind phosphate.

Belongs to the RNase PH family. As to quaternary structure, homohexameric ring arranged as a trimer of dimers.

It catalyses the reaction tRNA(n+1) + phosphate = tRNA(n) + a ribonucleoside 5'-diphosphate. In terms of biological role, phosphorolytic 3'-5' exoribonuclease that plays an important role in tRNA 3'-end maturation. Removes nucleotide residues following the 3'-CCA terminus of tRNAs; can also add nucleotides to the ends of RNA molecules by using nucleoside diphosphates as substrates, but this may not be physiologically important. Probably plays a role in initiation of 16S rRNA degradation (leading to ribosome degradation) during starvation. The protein is Ribonuclease PH of Geobacillus thermodenitrificans (strain NG80-2).